Here is a 929-residue protein sequence, read N- to C-terminus: Bifunctional uridylyltransferase/uridylyl-removing enzyme (929 aa).

Positions 1-379 (MSPSRPAADE…RPAAKRRRVP (379 aa)) are uridylyltransferase. Positions 380–735 (ESDDFVIDNN…VGFDEARAVT (356 aa)) are uridylyl-removing. Positions 495 to 618 (VDEHLIRCVG…VETVEQMKML (124 aa)) constitute an HD domain. ACT domains are found at residues 736 to 818 (ELTI…AVAR) and 849 to 929 (VIEV…KPAA).

The protein belongs to the GlnD family. It depends on Mg(2+) as a cofactor.

It catalyses the reaction [protein-PII]-L-tyrosine + UTP = [protein-PII]-uridylyl-L-tyrosine + diphosphate. The catalysed reaction is [protein-PII]-uridylyl-L-tyrosine + H2O = [protein-PII]-L-tyrosine + UMP + H(+). Its activity is regulated as follows. Uridylyltransferase (UTase) activity is inhibited by glutamine, while glutamine activates uridylyl-removing (UR) activity. Modifies, by uridylylation and deuridylylation, the PII regulatory proteins (GlnB and homologs), in response to the nitrogen status of the cell that GlnD senses through the glutamine level. Under low glutamine levels, catalyzes the conversion of the PII proteins and UTP to PII-UMP and PPi, while under higher glutamine levels, GlnD hydrolyzes PII-UMP to PII and UMP (deuridylylation). Thus, controls uridylylation state and activity of the PII proteins, and plays an important role in the regulation of nitrogen fixation and metabolism. This chain is Bifunctional uridylyltransferase/uridylyl-removing enzyme, found in Rhodopseudomonas palustris (strain ATCC BAA-98 / CGA009).